Reading from the N-terminus, the 1207-residue chain is Brassinosteroid LRR receptor kinase (1207 aa).

An N-terminal signal peptide occupies residues 1–34; sequence MKAHKTVFNQHPLSLNKLFFVLLLIFFLPPASPA. The short motif at 71 to 78 is the Cys pair 1 element; the sequence is CSFTGVSC. LRR repeat units lie at residues 109 to 131, 135 to 157, 161 to 181, 186 to 207, 213 to 234, 235 to 257, 258 to 280, 282 to 304, 305 to 325, 329 to 350, 353 to 374, 378 to 400, 402 to 423, 428 to 450, 452 to 474, 476 to 499, 500 to 523, 524 to 547, 548 to 570, and 572 to 594; these read NLES…AKSQ, TLDS…SSFG, NLKS…EMLK, SLQV…PWVS, ELEF…LDFK, NLSY…KDCS, NLQH…LSSC, KLSF…PSES, LQYL…QLAD, TVVE…SLGE, SLEL…DTLS, NIKT…FSNL, KLET…GICK, NLKV…LSNC, QLVS…LGSL, KLKD…MYLQ, ALEN…SNCT, KLNW…GRLS, NLAI…LGNC, and SLIW…LFKQ. Asparagine 119 carries N-linked (GlcNAc...) asparagine glycosylation. 2 N-linked (GlcNAc...) asparagine glycosylation sites follow: asparagine 166 and asparagine 196. 2 N-linked (GlcNAc...) asparagine glycosylation sites follow: asparagine 235 and asparagine 245. Asparagine 287 is a glycosylation site (N-linked (GlcNAc...) asparagine). N-linked (GlcNAc...) asparagine glycans are attached at residues asparagine 339 and asparagine 363. Asparagine 412 and asparagine 449 each carry an N-linked (GlcNAc...) asparagine glycan. A glycan (N-linked (GlcNAc...) asparagine) is linked at asparagine 521. Asparagine 556, asparagine 584, asparagine 646, and asparagine 662 each carry an N-linked (GlcNAc...) asparagine glycan. 4 LRR repeats span residues 664 to 686, 688 to 711, 712 to 735, and 736 to 758; these read SMIF…LGAM, YLSI…GGLK, NVAI…TSLT, and LLGE…APFD. Residues asparagine 724, asparagine 746, and asparagine 767 are each glycosylated (N-linked (GlcNAc...) asparagine). The short motif at 771-779 is the Cys pair 2 element; it reads CGYPLPIPC. A helical membrane pass occupies residues 803-823; that stretch reads SVAMGLLFSLFCIFGLIIVAI. The 276-residue stretch at 888-1163 folds into the Protein kinase domain; it reads FHNDSLVGSG…IQVMAMFKEI (276 aa). Residues 894–902 and lysine 916 contribute to the ATP site; that span reads VGSGGFGDV. Aspartate 1014 (proton acceptor) is an active-site residue.

This sequence belongs to the protein kinase superfamily. Ser/Thr protein kinase family.

It is found in the cell membrane. It catalyses the reaction L-seryl-[protein] + ATP = O-phospho-L-seryl-[protein] + ADP + H(+). It carries out the reaction L-threonyl-[protein] + ATP = O-phospho-L-threonyl-[protein] + ADP + H(+). Its function is as follows. Receptor with a serine/threonine-protein kinase activity. Regulates, in response to brassinosteroid binding, a signaling cascade involved in plant development, including expression of light- and stress-regulated genes, promotion of cell elongation, normal leaf and chloroplast senescence, and flowering. May be involved in a feedback regulation of brassinosteroid biosynthesis. May be also involved in the perception of systemin, a peptide hormone responsible for the systemic activation of defense genes in leaves of wounded plants. The chain is Brassinosteroid LRR receptor kinase (CURL3) from Solanum lycopersicum (Tomato).